Consider the following 318-residue polypeptide: Zinc chaperone YjiA (318 aa).

11–19 provides a ligand contact to GTP; it reads GFLGAGKTT. Zn(2+) contacts are provided by Glu-37, Glu-42, Cys-66, Glu-74, and His-114. The CXCC motif motif lies at 64 to 67; that stretch reads CICC. Residue Asp-161 participates in GTP binding. Residues Glu-167, His-170, and His-187 each coordinate Zn(2+). The region spanning 224–315 is the CobW C-terminal domain; that stretch reads ISSIVVELDY…EEEIRAAFAG (92 aa).

This sequence belongs to the SIMIBI class G3E GTPase family. ZNG1 subfamily. Monomer in the apo form. Metal binding induces oligomerization. Forms homodimers and higher oligomers.

It catalyses the reaction GTP + H2O = GDP + phosphate + H(+). With respect to regulation, GTPase activity is inhibited by metal binding. Activity is decreased in the presence of Co(II) or Ni(II), and is completely inhibited in the presence of Zn(II). Zinc chaperone that directly transfers zinc cofactor to target proteins, thereby activating them. Zinc is transferred from the CXCC motif in the GTPase domain to the zinc binding site in target proteins in a process requiring GTP hydrolysis. The protein is Zinc chaperone YjiA (yjiA) of Escherichia coli (strain K12).